The following is a 541-amino-acid chain: Arginine--tRNA ligase (541 aa).

The 'HIGH' region signature appears at 119 to 129 (ANPTGPLHIGH).

This sequence belongs to the class-I aminoacyl-tRNA synthetase family. As to quaternary structure, monomer.

Its subcellular location is the cytoplasm. It carries out the reaction tRNA(Arg) + L-arginine + ATP = L-arginyl-tRNA(Arg) + AMP + diphosphate. The protein is Arginine--tRNA ligase (argS) of Helicobacter pylori (strain J99 / ATCC 700824) (Campylobacter pylori J99).